The primary structure comprises 112 residues: uncharacterized protein (112 aa).

A helical membrane pass occupies residues 75–95 (ILGVFGGFIYILTPLPIVSGF).

It localises to the membrane. This is an uncharacterized protein from Methanocaldococcus jannaschii (strain ATCC 43067 / DSM 2661 / JAL-1 / JCM 10045 / NBRC 100440) (Methanococcus jannaschii).